Reading from the N-terminus, the 863-residue chain is Potassium/sodium hyperpolarization-activated cyclic nucleotide-gated channel 2 (863 aa).

The span at Met-1–Pro-10 shows a compositional bias: gly residues. The interval Met-1–Ser-131 is disordered. Over Met-1–Asp-188 the chain is Cytoplasmic. Pro residues predominate over residues Thr-17–Pro-47. Over residues Gly-106–Pro-128 the composition is skewed to low complexity. Phosphoserine is present on residues Ser-119 and Ser-134. Residues Ser-131–Asp-182 form an involved in subunit assembly region. A helical transmembrane segment spans residues Phe-189–Phe-209. Residues Lys-210–Thr-213 lie on the Extracellular side of the membrane. Residues Thr-214–Leu-234 form a helical membrane-spanning segment. Residues Asn-235–Arg-261 lie on the Cytoplasmic side of the membrane. The helical transmembrane segment at Thr-262–Glu-282 threads the bilayer. Residues Lys-283–Tyr-290 are Extracellular-facing. A helical; Voltage-sensor membrane pass occupies residues Lys-291–Leu-311. Over Arg-312–Asn-342 the chain is Cytoplasmic. A helical membrane pass occupies residues Leu-343–Met-363. Over Leu-364 to Leu-386 the chain is Extracellular. Asn-380 carries an N-linked (GlcNAc...) asparagine glycan. Positions Tyr-387–Pro-408 form an intramembrane region, pore-forming. Residues Glu-409–Asp-413 lie on the Extracellular side of the membrane. A helical membrane pass occupies residues Ile-414–His-434. At Ala-435 to Leu-863 the chain is on the cytoplasmic side. Gly-581, Glu-582, Cys-584, Arg-591, Thr-592, and Arg-632 together coordinate 3',5'-cyclic AMP. Position 641 is a phosphoserine; by PKG/PRKG2 (Ser-641). Ser-726 carries the phosphoserine modification. Arg-728 is modified (omega-N-methylarginine). The interval Val-730–Leu-863 is disordered. Positions Pro-734 to Pro-755 are enriched in pro residues. Ser-743, Ser-750, and Ser-757 each carry phosphoserine. 3 stretches are compositionally biased toward low complexity: residues Ser-756–Pro-765, Pro-778–Pro-800, and Pro-808–Ser-834. Residues Ser-840, Ser-842, and Ser-847 each carry the phosphoserine modification.

Belongs to the potassium channel HCN family. Homotetramer. The channel is composed of a homo- or heterotetrameric complex of pore-forming subunits. Heterotetramer with HCN1. Forms an obligate 4:4 complex with accessory subunit PEX5L; regulates HCN2 cell-surface expression and cyclic nucleotide dependence. Interacts with KCNE2. S-palmitoylated. In terms of processing, N-glycosylated; required for cell surface trafficking of HCN2. Post-translationally, phosphorylation at Ser-641 by PRKG2 shifts the voltage-dependence to more negative voltages, hence counteracting the stimulatory effect of cGMP on gating. As to expression, highly expressed in brain. Detected at low levels in heart, in ventricle, atrium and in sinoatrial node (SAN).

It localises to the cell membrane. The catalysed reaction is Na(+)(in) = Na(+)(out). The enzyme catalyses K(+)(in) = K(+)(out). It catalyses the reaction NH4(+)(in) = NH4(+)(out). Activated by cAMP, and at 10-100 times higher concentrations, also by cGMP. cAMP binding causes a conformation change that leads to the assembly of an active tetramer and channel opening. In the absence of cAMP, the C-terminal region is thought to exert a tonic inhibition on the pore when HCN2 is in a non-tetrameric form. Channel activity is modulated by intracellular chloride ions and pH; acidic pH shifts the activation to more negative voltages. Phosphatidylinositol-4,5- bisphosphate (PIP(2)) acts as a ligand that allosterically opens HCN2 by shifting voltage-dependent channel activation toward depolarized potentials. Inhibited by extracellular cesium ions. In terms of biological role, hyperpolarization-activated ion channel exhibiting weak selectivity for potassium over sodium ions. Contributes to the native pacemaker currents in heart (If) and in neurons (Ih). Can also transport ammonium in the distal nephron. Involved in the initiation of neuropathic pain in sensory neurons. The polypeptide is Potassium/sodium hyperpolarization-activated cyclic nucleotide-gated channel 2 (Mus musculus (Mouse)).